A 201-amino-acid polypeptide reads, in one-letter code: GTP-binding protein ryh1 (201 aa).

18–25 (GEQSVGKT) contacts GTP. Residues 40–48 (YQATIGIDF) carry the Effector region motif. Residues 66-70 (DTAGQ) and 124-127 (NKTD) contribute to the GTP site. Residues Cys-199 and Cys-201 are each lipidated (S-geranylgeranyl cysteine). Cys-201 is subject to Cysteine methyl ester.

Belongs to the small GTPase superfamily. Rab family.

The protein localises to the endosome membrane. It localises to the golgi apparatus membrane. Its subcellular location is the nucleus. The protein resides in the cytoplasm. It is found in the cytosol. Functionally, has a role in retrograde traffricking of proteins from the endosome to the Golgi. Involved in protein transport to the plasma membrane. Involved in the secretory pathway where it has a role in acid phosphatase secretion. Required also in normal glycosylation trafficking pathways. This is GTP-binding protein ryh1 (ryh1) from Schizosaccharomyces pombe (strain 972 / ATCC 24843) (Fission yeast).